A 222-amino-acid chain; its full sequence is 26S proteasome non-ATPase regulatory subunit 9 (222 aa).

The 87-residue stretch at 108–194 (QARDMAEARE…KPLNVMVIRR (87 aa)) folds into the PDZ domain. Serine 128 is modified (phosphoserine).

This sequence belongs to the proteasome subunit p27 family. Interacts with PSMC3. Part of a transient complex (modulator) containing PSMD9, PSMC6 and PSMC3 formed during the assembly of the 26S proteasome.

Acts as a chaperone during the assembly of the 26S proteasome, specifically of the base subcomplex of the PA700/19S regulatory complex (RC). During the base subcomplex assembly is part of an intermediate PSMD9:PSMC6:PSMC3 module, also known as modulator trimer complex; PSMD9 is released during the further base assembly process. The chain is 26S proteasome non-ATPase regulatory subunit 9 (Psmd9) from Rattus norvegicus (Rat).